The chain runs to 183 residues: Ribosome maturation factor RimP (183 aa).

The protein belongs to the RimP family.

The protein localises to the cytoplasm. Its function is as follows. Required for maturation of 30S ribosomal subunits. In Leptothrix cholodnii (strain ATCC 51168 / LMG 8142 / SP-6) (Leptothrix discophora (strain SP-6)), this protein is Ribosome maturation factor RimP.